Reading from the N-terminus, the 391-residue chain is Zinc finger protein DPF3 (391 aa).

Acidic residues predominate over residues 152–165; the sequence is ENGDGFHDDEDFEV. 2 disordered regions span residues 152-200 and 236-266; these read ENGD…PYVC and LAEE…QKAP. Over residues 169-183 the composition is skewed to basic residues; the sequence is KRKHRNKGRGRGSGR. Residues 198-235 form a C2H2-type zinc finger; the sequence is YVCDNRYKQKHNSKTADSVCGKRYKNRPGLSYHYAHTH. 2 consecutive PHD-type zinc fingers follow at residues 273–333 and 330–380; these read NDYC…CKSC and CKSC…CQNL.

Component of the BAF complex. Interacts with acetylated histones H3 and H4. Component of neuron-specific chromatin remodeling complex (nBAF complex), a subfamily of ATP-dependent SWI/SNF chromatin remodeling complexes. As to expression, expressed in the heart and somites.

The protein localises to the nucleus. Muscle-specific component of the BAF complex, a multiprotein complex involved in transcriptional activation and repression of select genes by chromatin remodeling (alteration of DNA-nucleosome topology). Specifically binds acetylated lysines on histone 3 and 4. In the complex, it acts as a tissue-specific anchor between histone acetylations and methylations and chromatin remodeling. Belongs to the neuron-specific chromatin remodeling complex (nBAF complex) and may play a role in neural development. Plays an essential role in heart and skeletal muscle development. This Danio rerio (Zebrafish) protein is Zinc finger protein DPF3 (dpf3).